A 336-amino-acid chain; its full sequence is 3-isopropylmalate dehydrogenase (336 aa).

Substrate is bound by residues Arg-87, Arg-97, Arg-121, and Asp-211. Mg(2+) is bound by residues Asp-211, Asp-235, and Asp-239. Position 271-283 (271-283 (GSAPDIAGQGIAD)) interacts with NAD(+).

Belongs to the isocitrate and isopropylmalate dehydrogenases family. LeuB type 2 subfamily. In terms of assembly, homodimer. Mg(2+) serves as cofactor. Requires Mn(2+) as cofactor.

The protein localises to the cytoplasm. It carries out the reaction (2R,3S)-3-isopropylmalate + NAD(+) = 4-methyl-2-oxopentanoate + CO2 + NADH. Its pathway is amino-acid biosynthesis; L-leucine biosynthesis; L-leucine from 3-methyl-2-oxobutanoate: step 3/4. Functionally, catalyzes the oxidation of 3-carboxy-2-hydroxy-4-methylpentanoate (3-isopropylmalate) to 3-carboxy-4-methyl-2-oxopentanoate. The product decarboxylates to 4-methyl-2 oxopentanoate. This chain is 3-isopropylmalate dehydrogenase, found in Rhodococcus opacus (strain B4).